The primary structure comprises 337 residues: Glyceraldehyde-3-phosphate dehydrogenase (337 aa).

NAD(+) is bound by residues 12-13, D34, and K79; that span reads RI. Residues 150–152, T181, 210–211, and R233 each bind D-glyceraldehyde 3-phosphate; these read SCT and TG. Residue C151 is the Nucleophile of the active site. N315 contributes to the NAD(+) binding site.

This sequence belongs to the glyceraldehyde-3-phosphate dehydrogenase family. As to quaternary structure, homotetramer.

The protein localises to the cytoplasm. It carries out the reaction D-glyceraldehyde 3-phosphate + phosphate + NAD(+) = (2R)-3-phospho-glyceroyl phosphate + NADH + H(+). Its pathway is carbohydrate degradation; glycolysis; pyruvate from D-glyceraldehyde 3-phosphate: step 1/5. This is Glyceraldehyde-3-phosphate dehydrogenase (GPD1) from Cochliobolus heterostrophus (Southern corn leaf blight fungus).